The primary structure comprises 202 residues: Ion-translocating oxidoreductase complex subunit G (202 aa).

The helical transmembrane segment at 11–31 threads the bilayer; the sequence is ACLMGFFSFFSLSSVIFVKNI. Thr176 bears the FMN phosphoryl threonine mark.

It belongs to the RnfG family. In terms of assembly, the complex is composed of six subunits: RnfA, RnfB, RnfC, RnfD, RnfE and RnfG. The cofactor is FMN.

Its subcellular location is the cell inner membrane. Its function is as follows. Part of a membrane-bound complex that couples electron transfer with translocation of ions across the membrane. This is Ion-translocating oxidoreductase complex subunit G from Buchnera aphidicola subsp. Schizaphis graminum (strain Sg).